The primary structure comprises 124 residues: Replication restart protein PriB (124 aa).

Residues 12 to 112 (IDNCLTLTGI…LHTEQIEFID (101 aa)) form the SSB domain.

It belongs to the PriB family. Homodimer. Interacts with PriA and DnaT. Component of the replication restart primosome. Primosome assembly occurs via a 'hand-off' mechanism. PriA binds to replication forks, subsequently PriB then DnaT bind; DnaT then displaces ssDNA to generate the helicase loading substrate.

In terms of biological role, involved in the restart of stalled replication forks, which reloads the replicative helicase on sites other than the origin of replication; the PriA-PriB pathway is the major replication restart pathway. During primosome assembly it facilitates complex formation between PriA and DnaT on DNA; stabilizes PriA on DNA. Stimulates the DNA unwinding activity of PriA helicase. The polypeptide is Replication restart protein PriB (Haemophilus ducreyi (strain 35000HP / ATCC 700724)).